A 75-amino-acid polypeptide reads, in one-letter code: MLIPYDQLEAETLTRLIEDFVTRDGTDNGDDTPLETRVLRVRQALAKGQAFILFDMESQQCQLLARHEVPRELLD.

Belongs to the UPF0270 family.

This is UPF0270 protein PSEEN1465 from Pseudomonas entomophila (strain L48).